A 623-amino-acid chain; its full sequence is Transcriptional activator of proteases prtT (623 aa).

Residues 50-79 (CHTCRKLKTRCDLDPRGHACRRCLSLRIDC) constitute a DNA-binding region (zn(2)-C6 fungal-type).

This sequence belongs to the prtT family.

The protein localises to the nucleus. Functionally, transcription factor required for protein utilization and degradation. Regulates transcription of major secreted proteases. The sequence is that of Transcriptional activator of proteases prtT (prtT) from Aspergillus niger (strain ATCC MYA-4892 / CBS 513.88 / FGSC A1513).